The following is a 295-amino-acid chain: Taste receptor type 2 member 120 (295 aa).

The Extracellular portion of the chain corresponds to Met1–Glu5. Residues Trp6–Ile26 traverse the membrane as a helical segment. At Thr27–Arg45 the chain is on the cytoplasmic side. The chain crosses the membrane as a helical span at residues Ile46–His66. Residues Ser67 to Arg80 lie on the Extracellular side of the membrane. A helical transmembrane segment spans residues Val81 to Leu101. At Ser102–Val127 the chain is on the cytoplasmic side. Residues Leu128–Ile148 traverse the membrane as a helical segment. At Lys149–Leu177 the chain is on the extracellular side. The N-linked (GlcNAc...) asparagine glycan is linked to Asn160. A helical membrane pass occupies residues Leu178–Ile198. Over Tyr199–Gln228 the chain is Cytoplasmic. A helical transmembrane segment spans residues Thr229 to Trp249. The Extracellular portion of the chain corresponds to Ser250–Pro255. The chain crosses the membrane as a helical span at residues Val256 to Ile276. Over Trp277–Cys295 the chain is Cytoplasmic.

Belongs to the G-protein coupled receptor T2R family.

It is found in the membrane. In terms of biological role, putative taste receptor which may play a role in the perception of bitterness. This Mus musculus (Mouse) protein is Taste receptor type 2 member 120.